A 360-amino-acid polypeptide reads, in one-letter code: uncharacterized protein (360 aa).

Positions 45-148 (EDIEDKILQI…KNKTYVSITP (104 aa)) constitute a THUMP domain.

This is an uncharacterized protein from Methanocaldococcus jannaschii (strain ATCC 43067 / DSM 2661 / JAL-1 / JCM 10045 / NBRC 100440) (Methanococcus jannaschii).